The chain runs to 330 residues: Probable cytosolic iron-sulfur protein assembly protein 1 (330 aa).

WD repeat units lie at residues leucine 12 to isoleucine 49, alanine 56 to phenylalanine 95, glycine 105 to glutamate 144, glutamate 151 to valine 190, glycine 195 to glutamine 236, valine 248 to phenylalanine 286, and cysteine 292 to alanine 330.

Belongs to the WD repeat CIA1 family. In terms of assembly, interacts with NAR1.

The protein resides in the cytoplasm. Its subcellular location is the nucleus. In terms of biological role, essential component of the cytosolic iron-sulfur (Fe/S) protein assembly machinery. Required for the maturation of extramitochondrial Fe/S proteins. The chain is Probable cytosolic iron-sulfur protein assembly protein 1 from Saccharomyces cerevisiae (strain YJM789) (Baker's yeast).